A 242-amino-acid polypeptide reads, in one-letter code: Protein unc-119 homolog B-A (242 aa).

Over residues 1–20 the composition is skewed to basic and acidic residues; that stretch reads MSGSKREAALTGQPKDERKK. The disordered stretch occupies residues 1-49; it reads MSGSKREAALTGQPKDERKKSGGGVINRLKARRVQGKESGTSDQSSVTP. The span at 38 to 48 shows a compositional bias: polar residues; sequence ESGTSDQSSVT. Tetradecanoate is bound at residue Y133.

The protein belongs to the PDE6D/unc-119 family.

Myristoyl-binding protein that acts as a cargo adapter: specifically binds the myristoyl moiety of a subset of N-terminally myristoylated proteins and is required for their localization. Plays a key role in localization of proteins to the primary cilium membrane. This chain is Protein unc-119 homolog B-A (unc119b-a), found in Xenopus laevis (African clawed frog).